Consider the following 800-residue polypeptide: Endoglucanase (800 aa).

Residues 1-30 (MMLRKKTKQLISSILILVLLLSLFPTALAA) form the signal peptide. The active-site Proton donor is the Glu-190. Catalysis depends on Glu-305, which acts as the Nucleophile. The tract at residues 761–800 (AATTEPVEPEPVDPGEETPPVDEKEAKTEQKEAEKEEKEE) is disordered. Residues 767–780 (VEPEPVDPGEETPP) are compositionally biased toward acidic residues. Positions 781-800 (VDEKEAKTEQKEAEKEEKEE) are enriched in basic and acidic residues.

This sequence belongs to the glycosyl hydrolase 5 (cellulase A) family.

The enzyme catalyses Endohydrolysis of (1-&gt;4)-beta-D-glucosidic linkages in cellulose, lichenin and cereal beta-D-glucans.. The chain is Endoglucanase from Halalkalibacter akibai (strain ATCC 43226 / DSM 21942 / CIP 109018 / JCM 9157 / 1139) (Bacillus akibai).